The sequence spans 147 residues: uncharacterized protein (147 aa).

2 consecutive transmembrane segments (helical) span residues 35-55 and 62-82; these read TIQL…FGNH and IWLL…LFEP.

In terms of assembly, has been detected in a cytochrome bc1-aa3 supercomplex; its deletion however leaves complex activity unaffected.

It localises to the cell membrane. This is an uncharacterized protein from Corynebacterium glutamicum (strain ATCC 13032 / DSM 20300 / JCM 1318 / BCRC 11384 / CCUG 27702 / LMG 3730 / NBRC 12168 / NCIMB 10025 / NRRL B-2784 / 534).